The sequence spans 541 residues: Chaperonin GroEL 2 (541 aa).

ATP-binding positions include 29–32, 86–90, Gly-413, 477–479, and Asp-493; these read TLGP, DGTTT, and NAA.

It belongs to the chaperonin (HSP60) family. In terms of assembly, forms a cylinder of 14 subunits composed of two heptameric rings stacked back-to-back. Interacts with the co-chaperonin GroES.

It localises to the cytoplasm. The catalysed reaction is ATP + H2O + a folded polypeptide = ADP + phosphate + an unfolded polypeptide.. In terms of biological role, together with its co-chaperonin GroES, plays an essential role in assisting protein folding. The GroEL-GroES system forms a nano-cage that allows encapsulation of the non-native substrate proteins and provides a physical environment optimized to promote and accelerate protein folding. The polypeptide is Chaperonin GroEL 2 (Nocardioides sp. (strain ATCC BAA-499 / JS614)).